The sequence spans 412 residues: Na(+)-translocating NADH-quinone reductase subunit B (412 aa).

Helical transmembrane passes span 57-77 (MILV…NVGL), 127-147 (VFFL…EVLF), and 163-183 (SILF…ALGI). Position 236 is an FMN phosphoryl threonine (Thr236). The next 5 helical transmembrane spans lie at 270-290 (GSIG…ILFG), 297-317 (IVAG…VIGS), 322-342 (MFSM…GMMF), 358-378 (WSYG…NPAY), and 381-401 (GMML…YLVV).

The protein belongs to the NqrB/RnfD family. Composed of six subunits; NqrA, NqrB, NqrC, NqrD, NqrE and NqrF. FMN is required as a cofactor.

The protein resides in the cell inner membrane. It carries out the reaction a ubiquinone + n Na(+)(in) + NADH + H(+) = a ubiquinol + n Na(+)(out) + NAD(+). NQR complex catalyzes the reduction of ubiquinone-1 to ubiquinol by two successive reactions, coupled with the transport of Na(+) ions from the cytoplasm to the periplasm. NqrA to NqrE are probably involved in the second step, the conversion of ubisemiquinone to ubiquinol. This is Na(+)-translocating NADH-quinone reductase subunit B from Klebsiella pneumoniae (strain 342).